Here is a 478-residue protein sequence, read N- to C-terminus: Cysteine--tRNA ligase (478 aa).

Residue cysteine 29 participates in Zn(2+) binding. Positions 31–41 (ATVQSIPHIGH) match the 'HIGH' region motif. Residues cysteine 207, histidine 232, and glutamate 236 each contribute to the Zn(2+) site. Positions 263–267 (KMSKS) match the 'KMSKS' region motif. Lysine 266 serves as a coordination point for ATP.

This sequence belongs to the class-I aminoacyl-tRNA synthetase family. Monomer. It depends on Zn(2+) as a cofactor.

Its subcellular location is the cytoplasm. It carries out the reaction tRNA(Cys) + L-cysteine + ATP = L-cysteinyl-tRNA(Cys) + AMP + diphosphate. The sequence is that of Cysteine--tRNA ligase from Corynebacterium jeikeium (strain K411).